A 327-amino-acid chain; its full sequence is Phenylalanine--tRNA ligase alpha subunit (327 aa).

A Mg(2+)-binding site is contributed by Glu-252.

Belongs to the class-II aminoacyl-tRNA synthetase family. Phe-tRNA synthetase alpha subunit type 1 subfamily. Tetramer of two alpha and two beta subunits. Mg(2+) serves as cofactor.

It localises to the cytoplasm. It carries out the reaction tRNA(Phe) + L-phenylalanine + ATP = L-phenylalanyl-tRNA(Phe) + AMP + diphosphate + H(+). In Yersinia pestis bv. Antiqua (strain Angola), this protein is Phenylalanine--tRNA ligase alpha subunit.